Consider the following 442-residue polypeptide: UDP-N-acetylmuramate--L-alanine ligase (442 aa).

Residue 110–116 (GAHGKTS) coordinates ATP.

This sequence belongs to the MurCDEF family.

The protein localises to the cytoplasm. The catalysed reaction is UDP-N-acetyl-alpha-D-muramate + L-alanine + ATP = UDP-N-acetyl-alpha-D-muramoyl-L-alanine + ADP + phosphate + H(+). It participates in cell wall biogenesis; peptidoglycan biosynthesis. Functionally, cell wall formation. The polypeptide is UDP-N-acetylmuramate--L-alanine ligase (Streptococcus thermophilus (strain ATCC BAA-491 / LMD-9)).